Here is a 511-residue protein sequence, read N- to C-terminus: MENNELVLVLDFGSQYNQLITRRIREFGVYSELHSHKLTAEEIKEMNPKGIILSGGPHSVYDENSFRCDEGIFELGIPVLGICYGMQLMSLHYDGKVERSKNREYGKALIELDGEPVLFKDTPKGQTVWMSHGDKVTAAPPSFNIDATSPSTPIAAISNVEKNLYGVQFHPEVRHTEYGNDLLNRFVFDVCGCTGDWSIENFIDMEVEKIQETVGDRKVLCALSGGVDSSVVAALIHKAIGDQLTCIFVDHGLLRKNEGDDVMKVFAEDFQMNIIKVDAKDRFLFKLEGVSDPELKRKIIGNEFIYVFDDEASKLKDIDFLAQGTLYTDVIESGTDTAQTIKSHHNVGGLPEDMQFTLIEPLNTLFKDEVRELGSQLGVPDRIVWRQPFPGPGLAIRILGEVTEEHLEIVRESDAILREEIAKAGLDRDIWQYFTVLPNIKSVGVMGDARTYAHTIGIRAVTSIDGMTSDWARIPWDVLERISTRLVNDVDNINRVVYDVTSKPPATIEWE.

Residues 6–196 form the Glutamine amidotransferase type-1 domain; that stretch reads LVLVLDFGSQ…VFDVCGCTGD (191 aa). Cys83 functions as the Nucleophile in the catalytic mechanism. Residues His170 and Glu172 contribute to the active site. Positions 197–386 constitute a GMPS ATP-PPase domain; the sequence is WSIENFIDME…LGVPDRIVWR (190 aa). 224 to 230 is a binding site for ATP; sequence SGGVDSS.

As to quaternary structure, homodimer.

The enzyme catalyses XMP + L-glutamine + ATP + H2O = GMP + L-glutamate + AMP + diphosphate + 2 H(+). It participates in purine metabolism; GMP biosynthesis; GMP from XMP (L-Gln route): step 1/1. Its function is as follows. Catalyzes the synthesis of GMP from XMP. This Oceanobacillus iheyensis (strain DSM 14371 / CIP 107618 / JCM 11309 / KCTC 3954 / HTE831) protein is GMP synthase [glutamine-hydrolyzing].